The chain runs to 362 residues: tRNA-specific 2-thiouridylase MnmA 1 (362 aa).

ATP is bound by residues 29-36 and Met55; that span reads AMSGGVDS. Residue Cys109 is the Nucleophile of the active site. A disulfide bridge connects residues Cys109 and Cys201. Gly133 contacts ATP. The tract at residues 151–153 is interaction with tRNA; that stretch reads KDQ. The Cysteine persulfide intermediate role is filled by Cys201.

It belongs to the MnmA/TRMU family.

The protein localises to the cytoplasm. It carries out the reaction S-sulfanyl-L-cysteinyl-[protein] + uridine(34) in tRNA + AH2 + ATP = 2-thiouridine(34) in tRNA + L-cysteinyl-[protein] + A + AMP + diphosphate + H(+). Its function is as follows. Catalyzes the 2-thiolation of uridine at the wobble position (U34) of tRNA, leading to the formation of s(2)U34. The sequence is that of tRNA-specific 2-thiouridylase MnmA 1 from Fusobacterium nucleatum subsp. nucleatum (strain ATCC 25586 / DSM 15643 / BCRC 10681 / CIP 101130 / JCM 8532 / KCTC 2640 / LMG 13131 / VPI 4355).